We begin with the raw amino-acid sequence, 83 residues long: Short neurotoxin 3FTx-Oxy4 (83 aa).

Positions 1–21 (MKTLLLTLVVVTIVCLDLGYT) are cleaved as a signal peptide. 4 cysteine pairs are disulfide-bonded: C24-C45, C38-C62, C64-C75, and C76-C81.

The protein belongs to the three-finger toxin family. Short-chain subfamily. Type I alpha-neurotoxin sub-subfamily. In terms of tissue distribution, expressed by the venom gland.

Its subcellular location is the secreted. In terms of biological role, binds to muscle nicotinic acetylcholine receptor (nAChR) and inhibit acetylcholine from binding to the receptor, thereby impairing neuromuscular transmission. The protein is Short neurotoxin 3FTx-Oxy4 of Oxyuranus microlepidotus (Inland taipan).